We begin with the raw amino-acid sequence, 635 residues long: Glutamine--fructose-6-phosphate aminotransferase [isomerizing] (635 aa).

The Nucleophile; for GATase activity role is filled by cysteine 2. One can recognise a Glutamine amidotransferase type-2 domain in the interval 2 to 218 (CGIVGMVAGR…EGDIADVHRD (217 aa)). SIS domains follow at residues 299-439 (FERL…AKKI) and 472-625 (CARH…IDQP). Lysine 630 functions as the For Fru-6P isomerization activity in the catalytic mechanism.

As to quaternary structure, homodimer.

Its subcellular location is the cytoplasm. It catalyses the reaction D-fructose 6-phosphate + L-glutamine = D-glucosamine 6-phosphate + L-glutamate. Functionally, catalyzes the first step in hexosamine metabolism, converting fructose-6P into glucosamine-6P using glutamine as a nitrogen source. The polypeptide is Glutamine--fructose-6-phosphate aminotransferase [isomerizing] (Treponema pallidum (strain Nichols)).